The following is a 506-amino-acid chain: ATP synthase subunit alpha, plastid (506 aa).

An ATP-binding site is contributed by glycine 170–threonine 177.

It belongs to the ATPase alpha/beta chains family. In terms of assembly, F-type ATPases have 2 components, CF(1) - the catalytic core - and CF(0) - the membrane proton channel. CF(1) has five subunits: alpha(3), beta(3), gamma(1), delta(1), epsilon(1). CF(0) has four main subunits: a, b, b' and c.

The protein localises to the plastid membrane. The enzyme catalyses ATP + H2O + 4 H(+)(in) = ADP + phosphate + 5 H(+)(out). Produces ATP from ADP in the presence of a proton gradient across the membrane. The alpha chain is a regulatory subunit. The chain is ATP synthase subunit alpha, plastid from Prototheca wickerhamii.